A 261-amino-acid polypeptide reads, in one-letter code: Indole-3-glycerol phosphate synthase (261 aa).

The protein belongs to the TrpC family.

It catalyses the reaction 1-(2-carboxyphenylamino)-1-deoxy-D-ribulose 5-phosphate + H(+) = (1S,2R)-1-C-(indol-3-yl)glycerol 3-phosphate + CO2 + H2O. It functions in the pathway amino-acid biosynthesis; L-tryptophan biosynthesis; L-tryptophan from chorismate: step 4/5. The polypeptide is Indole-3-glycerol phosphate synthase (Burkholderia thailandensis (strain ATCC 700388 / DSM 13276 / CCUG 48851 / CIP 106301 / E264)).